A 123-amino-acid chain; its full sequence is Large ribosomal subunit protein bL17 (123 aa).

It belongs to the bacterial ribosomal protein bL17 family. As to quaternary structure, part of the 50S ribosomal subunit. Contacts protein L32.

In Dichelobacter nodosus (strain VCS1703A), this protein is Large ribosomal subunit protein bL17.